An 85-amino-acid polypeptide reads, in one-letter code: Large ribosomal subunit protein bL27 (85 aa).

The segment at 1-23 (MAHKKAGGSTRNGRDSESKRLGV) is disordered.

This sequence belongs to the bacterial ribosomal protein bL27 family.

This is Large ribosomal subunit protein bL27 from Thioalkalivibrio sulfidiphilus (strain HL-EbGR7).